The chain runs to 62 residues: SPbeta prophage-derived uncharacterized protein YonU (62 aa).

Residues 1–32 (MEKKFLDAIQQLTKELEMLKKDIDSIKEATVR) adopt a coiled-coil conformation.

The protein is SPbeta prophage-derived uncharacterized protein YonU (yonU) of Bacillus subtilis (strain 168).